The chain runs to 204 residues: Guanylate kinase (204 aa).

The 179-residue stretch at 3-181 folds into the Guanylate kinase-like domain; it reads GTLYIVSASS…AVSEMSAIFT (179 aa). 10-17 contributes to the ATP binding site; sequence ASSGTGKS.

The protein belongs to the guanylate kinase family.

Its subcellular location is the cytoplasm. The enzyme catalyses GMP + ATP = GDP + ADP. Its function is as follows. Essential for recycling GMP and indirectly, cGMP. This Xylella fastidiosa (strain Temecula1 / ATCC 700964) protein is Guanylate kinase.